Consider the following 514-residue polypeptide: Glucose-1-phosphate adenylyltransferase small subunit 2, chloroplastic/amyloplastic/cytosolic (514 aa).

The N-terminal 64 residues, Met-1 to Arg-64, are a transit peptide targeting the chloroplast. A disordered region spans residues Arg-35–Thr-74. Low complexity predominate over residues Gly-41–Ala-52.

Belongs to the bacterial/plant glucose-1-phosphate adenylyltransferase family. As to quaternary structure, heterotetramer composed of two small and two large subunits. In terms of tissue distribution, expressed in leaves.

Its subcellular location is the plastid. It is found in the chloroplast. The protein localises to the amyloplast. It localises to the cytoplasm. The protein resides in the cytosol. It catalyses the reaction alpha-D-glucose 1-phosphate + ATP + H(+) = ADP-alpha-D-glucose + diphosphate. The protein operates within glycan biosynthesis; starch biosynthesis. Activated by 3'phosphoglycerate, inhibited by orthophosphate. Allosteric regulation. Inhibited by inorganic phosphate (Pi). Functionally, involved in synthesis of starch. Catalyzes the synthesis of ADP-glucose, a molecule that serves as an activated glycosyl donor for alpha-1,4-glucan synthesis. The chloroplastic isoform 1 is essential for starch synthesis in leaf chloroplasts and the cytosolic isoform 2 for synthesis in seed endosperm. In Oryza sativa subsp. japonica (Rice), this protein is Glucose-1-phosphate adenylyltransferase small subunit 2, chloroplastic/amyloplastic/cytosolic.